A 32-amino-acid chain; its full sequence is uncharacterized protein (32 aa).

This is an uncharacterized protein from Mastigocladus laminosus (Fischerella sp.).